Here is a 548-residue protein sequence, read N- to C-terminus: MKHLHDLPAWSKLWNHFDDSKTLHMREMFEQDPQRAERYWLQVGGLTLDYSKNRINDETMSLLFELAREAGVPERMRQMFHGEKINTTENRAVLHVALRNRTNSPIMVDGEDVMPKVNRVLQRMGEFAHEVRSGSWLGYTNQVITDVVNIGIGGSDLGPLTMCTALKPFGHPRLNMHFVSNVDGSQLRDVLSKVHPETTLFIIASKTFTTQETLTNALTAREWFLNHAGDEEAVAKHFAAVSTNRKAVAEFGIDIANMFEFWDWVGGRYSLWSAIGLPIMLYLGEENFIEMLNGAHLMDQHFINTPLERNLPVILALIGIWYINYYGGGSHVIAPYDQHLHRLPKFIQQLDMESNGKQVTLDGKAVGHETSPIIWGETGINGQHAFFQLLHQGTHITPIDLIASLEKRSNLPGHHEILLANVFAQAEAFMCGKTPDEVRAELKAQGMDEARIEELVPHKTFSGNRPTNLILMDKVNPRNMGSLIAMYEHKTFVQGIIWGINSFDQWGVELGKQLAKTILGELTGETEPQKHDSSTERLINLYLQTNRK.

The Proton donor role is filled by Glu-353. Residues His-384 and Lys-512 contribute to the active site.

This sequence belongs to the GPI family.

It localises to the cytoplasm. It carries out the reaction alpha-D-glucose 6-phosphate = beta-D-fructose 6-phosphate. Its pathway is carbohydrate biosynthesis; gluconeogenesis. It participates in carbohydrate degradation; glycolysis; D-glyceraldehyde 3-phosphate and glycerone phosphate from D-glucose: step 2/4. Catalyzes the reversible isomerization of glucose-6-phosphate to fructose-6-phosphate. This chain is Glucose-6-phosphate isomerase 1, found in Neisseria gonorrhoeae (strain ATCC 700825 / FA 1090).